Reading from the N-terminus, the 584-residue chain is PE-PGRS family protein PE_PGRS11 (584 aa).

The PE domain occupies 1 to 92 (MSFVIVARDA…AATSYAVTEV (92 aa)). Residue His290 is the Tele-phosphohistidine intermediate of the active site. The active-site Proton donor/acceptor is the Glu365. Residues 384–584 (YLVGPIAWTL…LPIGLPSLIP (201 aa)) form a phosphoglycerate mutase region.

It in the N-terminal section; belongs to the mycobacterial PE family. PGRS subfamily. The protein in the C-terminal section; belongs to the phosphoglycerate mutase family. Interacts with human TLR2. The cofactor is Mg(2+).

The protein resides in the secreted. It localises to the cell wall. It is found in the cell surface. It catalyses the reaction (2R)-2-phosphoglycerate = (2R)-3-phosphoglycerate. Functionally, induces maturation and activation of human dendritic cells (DCs), via TLR2-dependent activation of ERK1/2, p38 MAPK, and NF-kappa-B signaling pathways, and enhances the ability of DCs to stimulate CD4(+) T cells. By activating DCs, could potentially contribute to the initiation of innate immune responses during tuberculosis infection and hence regulate the clinical course of tuberculosis. Involved in resistance to oxidative stress, via TLR2-dependent activation of the PI3K-ERK1/2-NF-kappa-B signaling pathway and expression of COX-2 and Bcl2. Also abolishes H(2)O(2)-triggered activation of p38 MAPK. This Mycobacterium tuberculosis (strain ATCC 25618 / H37Rv) protein is PE-PGRS family protein PE_PGRS11.